Here is a 596-residue protein sequence, read N- to C-terminus: tRNA(Met) cytidine acetyltransferase TmcA (596 aa).

ATP is bound by residues Gln138, 160-169 (GRGKSTLAGK), and Arg285. The region spanning 328–481 (SDLRRLFDAQ…SGYHSAMMLY (154 aa)) is the N-acetyltransferase domain. Acetyl-CoA is bound by residues 406-408 (IAV) and 413-419 (QKQGIGK).

The protein belongs to the RNA cytidine acetyltransferase family. TmcA subfamily.

Its subcellular location is the cytoplasm. The catalysed reaction is cytidine(34) in elongator tRNA(Met) + acetyl-CoA + ATP + H2O = N(4)-acetylcytidine(34) in elongator tRNA(Met) + ADP + phosphate + CoA + H(+). Its function is as follows. Catalyzes the formation of N(4)-acetylcytidine (ac(4)C) at the wobble position of tRNA(Met), by using acetyl-CoA as an acetyl donor and ATP (or GTP). The polypeptide is tRNA(Met) cytidine acetyltransferase TmcA (Actinobacillus pleuropneumoniae serotype 5b (strain L20)).